The primary structure comprises 1198 residues: Spindle-defective protein 5 (1198 aa).

Positions 1 to 10 (MEDNSVLNED) are enriched in polar residues. Residues 1-45 (MEDNSVLNEDSNLEHVEGQPRRSMSQPVLNVEGDKRTSSTSATQQ) are disordered. Coiled-coil stretches lie at residues 67 to 381 (EENK…QLTG), 566 to 603 (HDVA…FEEI), 694 to 916 (KFTS…LSTS), 983 to 1035 (DELC…ENVP), and 1127 to 1175 (KNET…EFQD).

The protein localises to the cytoplasm. It localises to the cytoskeleton. The protein resides in the microtubule organizing center. It is found in the centrosome. In terms of biological role, plays a central role in centrosome maturation and mitotic spindle assembly during the first division of the zygote. Required for the centrosomal localization of air-1 and zyg-9. Probably not required in late embryogenesis and during larval development. The chain is Spindle-defective protein 5 (spd-5) from Caenorhabditis elegans.